Reading from the N-terminus, the 269-residue chain is Shikimate dehydrogenase (NADP(+)) (269 aa).

Residues 14 to 16 (SVS) and Thr61 contribute to the shikimate site. Lys65 serves as the catalytic Proton acceptor. Positions 85 and 98 each coordinate shikimate. NADP(+)-binding positions include 120 to 124 (GAGGA), 143 to 148 (NRTEEK), and Thr211. Tyr213 provides a ligand contact to shikimate. Gly234 contributes to the NADP(+) binding site.

This sequence belongs to the shikimate dehydrogenase family. As to quaternary structure, homodimer.

It catalyses the reaction shikimate + NADP(+) = 3-dehydroshikimate + NADPH + H(+). The protein operates within metabolic intermediate biosynthesis; chorismate biosynthesis; chorismate from D-erythrose 4-phosphate and phosphoenolpyruvate: step 4/7. Involved in the biosynthesis of the chorismate, which leads to the biosynthesis of aromatic amino acids. Catalyzes the reversible NADPH linked reduction of 3-dehydroshikimate (DHSA) to yield shikimate (SA). The sequence is that of Shikimate dehydrogenase (NADP(+)) from Archaeoglobus fulgidus (strain ATCC 49558 / DSM 4304 / JCM 9628 / NBRC 100126 / VC-16).